Here is a 693-residue protein sequence, read N- to C-terminus: Cyclin-dependent kinase G-1 (693 aa).

The span at 1–10 (MAAGSHGGYR) shows a compositional bias: gly residues. Disordered stretches follow at residues 1 to 148 (MAAG…ARDP) and 236 to 308 (KKKK…DDYP). The span at 13-24 (EVAREREHDVGV) shows a compositional bias: basic and acidic residues. A compositionally biased stretch (basic residues) spans 26-39 (RRSKEHYHHRHPSR). Composition is skewed to basic and acidic residues over residues 40 to 54 (HRDSERRRDGGRSGG), 75 to 87 (RPSEGRTEDREPG), and 97 to 122 (RSGERPMKTREPRENGVTRVSKEEAK). The segment covering 268–284 (SVRSSSRSSDSGVLQGS) has biased composition (low complexity). The span at 287 to 304 (RDLEVEKGDNIDVEKAAD) shows a compositional bias: basic and acidic residues. The region spanning 349-640 (FERLNTINEG…AEDALNHEWF (292 aa)) is the Protein kinase domain. ATP contacts are provided by residues 355–363 (INEGTYGVV) and Lys378. Position 359 is a phosphothreonine (Thr359). Tyr360 carries the post-translational modification Phosphotyrosine. The active-site Proton acceptor is the Asp473. Position 500 is a phosphoserine (Ser500). The residue at position 506 (Thr506) is a Phosphothreonine. The tract at residues 664–693 (RFKKHMKSPDPLEEQWMKEQGNNGDRGLFG) is disordered.

It belongs to the protein kinase superfamily. CMGC Ser/Thr protein kinase family. CDC2/CDKX subfamily.

The catalysed reaction is L-seryl-[protein] + ATP = O-phospho-L-seryl-[protein] + ADP + H(+). It catalyses the reaction L-threonyl-[protein] + ATP = O-phospho-L-threonyl-[protein] + ADP + H(+). It carries out the reaction [DNA-directed RNA polymerase] + ATP = phospho-[DNA-directed RNA polymerase] + ADP + H(+). The chain is Cyclin-dependent kinase G-1 (CDKG-1) from Oryza sativa subsp. indica (Rice).